We begin with the raw amino-acid sequence, 179 residues long: Apoptosis regulator DPV022 (179 aa).

The chain crosses the membrane as a helical span at residues 148–170 (VLITNYLKITIFGAILGITAYYI).

As to quaternary structure, interacts with host BAX and BAK1.

It is found in the host mitochondrion. The protein localises to the host membrane. Its function is as follows. Plays a role in the inhibition of host apoptosis by sequestering and inactivating several proapoptotic BCL-2 proteins, including BAK1 and BAX. Prevents the conformational activation of both of them. The polypeptide is Apoptosis regulator DPV022 (DPV022) (Deerpox virus (strain Mule deer/United States/W-848-83/1983) (DPV)).